The sequence spans 475 residues: MADMQNLVERLERAVGRLEAVSHTSDMHRGYGDSPSKAGAAPYVQAFDSLLAGPVAEYLKISKEIGGDVQKHAEMVHTGLKLERALLVTASQCQQPADNKLSDLLAPISEQIKEVITFREKNRGSKLFNHLSAVSESIQALGWVAMAPKPGPYVKEMNDAAMFYTNRVLKEYKDVDKKHVDWVKAYLSIWTELQAYIKEFHTTGLVWSKTGPVAKELSGLPSGPSAGSGPPPPPPGPPPPPVSTSSGSDESASRSALFAQINQGESITHALKHVSDDMKTHKNPALKAQSGPVRSGPKPFSAPKPQTSPSPKPATKKEPAVLELEGKKWRVENQENVSNLVIDDTELKQVAYIYKCVNTTLQIKGKINSITVDNCKKLGLVFDDVVGIVEIINSRDVKVQVMGKVPTISINKTDGCHAYLSKNSLDCEIVSAKSSEMNVLIPTEGGDFNEFPVPEQFKTLWNGQKLVTTVTEIAG.

Alanine 2 carries the N-acetylalanine modification. Tyrosine 31 carries the post-translational modification Phosphotyrosine. Serine 34 is modified (phosphoserine). At lysine 81 the chain carries N6-acetyllysine. Disordered regions lie at residues 216–255 (ELSGLPSGPSAGSGPPPPPPGPPPPPVSTSSGSDESASRS) and 278–318 (MKTH…TKKE). Low complexity predominate over residues 218–228 (SGLPSGPSAGS). Over residues 229-242 (GPPPPPPGPPPPPV) the composition is skewed to pro residues. Positions 243–255 (STSSGSDESASRS) are enriched in low complexity. Position 287 is an N6-methyllysine (lysine 287). 3 positions are modified to phosphoserine: serine 290, serine 295, and serine 301. Residues 300 to 312 (FSAPKPQTSPSPK) are compositionally biased toward pro residues. Threonine 307 is subject to Phosphothreonine. Phosphoserine is present on residues serine 308 and serine 310. The C-CAP/cofactor C-like domain occupies 313–453 (PATKKEPAVL…EGGDFNEFPV (141 aa)). Residue lysine 348 forms a Glycyl lysine isopeptide (Lys-Gly) (interchain with G-Cter in SUMO1) linkage.

The protein belongs to the CAP family. In terms of assembly, homodimer. Binds actin monomers.

Its subcellular location is the cell membrane. Its function is as follows. Directly regulates filament dynamics and has been implicated in a number of complex developmental and morphological processes, including mRNA localization and the establishment of cell polarity. The chain is Adenylyl cyclase-associated protein 1 (CAP1) from Macaca fascicularis (Crab-eating macaque).